A 114-amino-acid chain; its full sequence is Putative pterin-4-alpha-carbinolamine dehydratase (114 aa).

It belongs to the pterin-4-alpha-carbinolamine dehydratase family.

It carries out the reaction (4aS,6R)-4a-hydroxy-L-erythro-5,6,7,8-tetrahydrobiopterin = (6R)-L-erythro-6,7-dihydrobiopterin + H2O. This Methylococcus capsulatus (strain ATCC 33009 / NCIMB 11132 / Bath) protein is Putative pterin-4-alpha-carbinolamine dehydratase.